Here is a 92-residue protein sequence, read N- to C-terminus: Putative regulatory protein CA_C1717 (92 aa).

Belongs to the RemA family.

This is Putative regulatory protein CA_C1717 from Clostridium acetobutylicum (strain ATCC 824 / DSM 792 / JCM 1419 / IAM 19013 / LMG 5710 / NBRC 13948 / NRRL B-527 / VKM B-1787 / 2291 / W).